The chain runs to 285 residues: Pantothenate synthetase (285 aa).

ATP is bound at residue Met30 to His37. His37 functions as the Proton donor in the catalytic mechanism. Gln61 is a (R)-pantoate binding site. Gln61 lines the beta-alanine pocket. Gly147 to Asp150 serves as a coordination point for ATP. (R)-pantoate is bound at residue Gln153. Residues Val176 and Lys184 to Arg187 contribute to the ATP site.

Belongs to the pantothenate synthetase family. In terms of assembly, homodimer.

It is found in the cytoplasm. The catalysed reaction is (R)-pantoate + beta-alanine + ATP = (R)-pantothenate + AMP + diphosphate + H(+). The protein operates within cofactor biosynthesis; (R)-pantothenate biosynthesis; (R)-pantothenate from (R)-pantoate and beta-alanine: step 1/1. Functionally, catalyzes the condensation of pantoate with beta-alanine in an ATP-dependent reaction via a pantoyl-adenylate intermediate. The polypeptide is Pantothenate synthetase (Listeria monocytogenes serovar 1/2a (strain ATCC BAA-679 / EGD-e)).